A 154-amino-acid polypeptide reads, in one-letter code: MPKGEGKLIAQNRKARHDYSIIDTVEAGLVLQGTEIKSIRNGRINLKDGFARIRNGEAFLYNVHISPYEQGNIFNHDPLRTRKLLLHKKQINKLIGETKNTGITLVPLKVYIKDGYAKVLIGLAKGKKQYDKREDLKRKEVDRQISRTLKNNRR.

It belongs to the SmpB family.

It localises to the cytoplasm. Required for rescue of stalled ribosomes mediated by trans-translation. Binds to transfer-messenger RNA (tmRNA), required for stable association of tmRNA with ribosomes. tmRNA and SmpB together mimic tRNA shape, replacing the anticodon stem-loop with SmpB. tmRNA is encoded by the ssrA gene; the 2 termini fold to resemble tRNA(Ala) and it encodes a 'tag peptide', a short internal open reading frame. During trans-translation Ala-aminoacylated tmRNA acts like a tRNA, entering the A-site of stalled ribosomes, displacing the stalled mRNA. The ribosome then switches to translate the ORF on the tmRNA; the nascent peptide is terminated with the 'tag peptide' encoded by the tmRNA and targeted for degradation. The ribosome is freed to recommence translation, which seems to be the essential function of trans-translation. This chain is SsrA-binding protein, found in Enterococcus faecalis (strain ATCC 700802 / V583).